Here is a 289-residue protein sequence, read N- to C-terminus: Mas-related G-protein coupled receptor member G (289 aa).

Topologically, residues 1-13 (MFSIFNIWGTFNK) are extracellular. Residues 14–34 (VLFFLSLTVSLAGLVGNALLL) traverse the membrane as a helical segment. Residues 35 to 52 (WHLGLHIKKGPFNTYLLH) lie on the Cytoplasmic side of the membrane. Residues 53–73 (LAAADFLFLSCQVGFSIATIV) traverse the membrane as a helical segment. The Extracellular portion of the chain corresponds to 74 to 78 (SGHED). A helical transmembrane segment spans residues 79–99 (TLYFPVTFLWFAVGLWLLAAF). At 100-120 (SVDCCLAYMFPSFCSPNRRPR) the chain is on the cytoplasmic side. A helical membrane pass occupies residues 121–141 (FTSVVLCLVIWALTMPAVLLP). Residues 142-164 (ANACGLLKNGMSLLVCLKYHWTS) are Extracellular-facing. A helical transmembrane segment spans residues 165 to 185 (VTWLAVLSGMACGASKFLLIF). Residues 186–199 (GNCCSSQPPPKFCK) are Cytoplasmic-facing. Residues 200 to 220 (LAQCSGILLFFCRLPLVVYWC) traverse the membrane as a helical segment. Topologically, residues 221 to 222 (LR) are extracellular. A helical membrane pass occupies residues 223–243 (PVLKFLLPFFFPLATLLACID). Residues 244-289 (SSAKPLLYYMKGRQLRKDPLQVALNRALGEESQSGLGGLSLPMHQV) are Cytoplasmic-facing.

Belongs to the G-protein coupled receptor 1 family. Mas subfamily.

Its subcellular location is the cell membrane. Its function is as follows. Orphan receptor. May regulate nociceptor function and/or development, including the sensation or modulation of pain. The protein is Mas-related G-protein coupled receptor member G (Mrgprg) of Mus musculus (Mouse).